A 225-amino-acid polypeptide reads, in one-letter code: 2-C-methyl-D-erythritol 4-phosphate cytidylyltransferase (225 aa).

This sequence belongs to the IspD/TarI cytidylyltransferase family. IspD subfamily.

It catalyses the reaction 2-C-methyl-D-erythritol 4-phosphate + CTP + H(+) = 4-CDP-2-C-methyl-D-erythritol + diphosphate. It participates in isoprenoid biosynthesis; isopentenyl diphosphate biosynthesis via DXP pathway; isopentenyl diphosphate from 1-deoxy-D-xylulose 5-phosphate: step 2/6. Its function is as follows. Catalyzes the formation of 4-diphosphocytidyl-2-C-methyl-D-erythritol from CTP and 2-C-methyl-D-erythritol 4-phosphate (MEP). This Prochlorococcus marinus (strain NATL2A) protein is 2-C-methyl-D-erythritol 4-phosphate cytidylyltransferase.